Reading from the N-terminus, the 210-residue chain is Prolactin (210 aa).

The N-terminal stretch at 1–23 is a signal peptide; that stretch reads MTQGSRLYFAVAVLMCGFVSING. Cystine bridges form between cysteine 69-cysteine 183 and cysteine 200-cysteine 210.

The protein belongs to the somatotropin/prolactin family. Pituitary gland.

It localises to the secreted. This chain is Prolactin (prl1), found in Carassius auratus (Goldfish).